Consider the following 376-residue polypeptide: Cytochrome c oxidase subunit 2, mitochondrial (376 aa).

A helical membrane pass occupies residues 164–184; sequence IFFFLVQILVFVLWVLSRALW. Residues 185–204 are Mitochondrial matrix-facing; it reads CFRSKISPIPQRIVHGTTIE. The helical transmembrane segment at 205–225 threads the bilayer; the sequence is ILWTILPSIILMFIAIPSFTL. Topologically, residues 226-376 are mitochondrial intermembrane; sequence LYSMDDVVVD…YGSWVSNQIQ (151 aa). Positions 309, 344, 346, 348, 352, and 355 each coordinate Cu cation. A Mg(2+)-binding site is contributed by E346.

Belongs to the cytochrome c oxidase subunit 2 family. Component of the cytochrome c oxidase (complex IV, CIV), a multisubunit enzyme composed of a catalytic core of 3 subunits and several supernumerary subunits. The complex exists as a monomer or a dimer and forms supercomplexes (SCs) in the inner mitochondrial membrane with ubiquinol-cytochrome c oxidoreductase (cytochrome b-c1 complex, complex III, CIII). The cofactor is Cu cation.

It localises to the mitochondrion inner membrane. The catalysed reaction is 4 Fe(II)-[cytochrome c] + O2 + 8 H(+)(in) = 4 Fe(III)-[cytochrome c] + 2 H2O + 4 H(+)(out). In terms of biological role, component of the cytochrome c oxidase, the last enzyme in the mitochondrial electron transport chain which drives oxidative phosphorylation. The respiratory chain contains 3 multisubunit complexes succinate dehydrogenase (complex II, CII), ubiquinol-cytochrome c oxidoreductase (cytochrome b-c1 complex, complex III, CIII) and cytochrome c oxidase (complex IV, CIV), that cooperate to transfer electrons derived from NADH and succinate to molecular oxygen, creating an electrochemical gradient over the inner membrane that drives transmembrane transport and the ATP synthase. Cytochrome c oxidase is the component of the respiratory chain that catalyzes the reduction of oxygen to water. Electrons originating from reduced cytochrome c in the intermembrane space (IMS) are transferred via the dinuclear copper A center (CU(A)) of subunit 2 and heme A of subunit 1 to the active site in subunit 1, a binuclear center (BNC) formed by heme A3 and copper B (CU(B)). The BNC reduces molecular oxygen to 2 water molecules using 4 electrons from cytochrome c in the IMS and 4 protons from the mitochondrial matrix. This chain is Cytochrome c oxidase subunit 2, mitochondrial (COX2), found in Vigna unguiculata (Cowpea).